The following is a 155-amino-acid chain: Endoribonuclease YbeY (155 aa).

Zn(2+) contacts are provided by His110, His114, and His120.

The protein belongs to the endoribonuclease YbeY family. The cofactor is Zn(2+).

It localises to the cytoplasm. Its function is as follows. Single strand-specific metallo-endoribonuclease involved in late-stage 70S ribosome quality control and in maturation of the 3' terminus of the 16S rRNA. The polypeptide is Endoribonuclease YbeY (Deinococcus geothermalis (strain DSM 11300 / CIP 105573 / AG-3a)).